The primary structure comprises 314 residues: Protein YdgH (314 aa).

The N-terminal stretch at 1 to 19 (MKLKNTLLASALLSAMAFS) is a signal peptide.

This sequence to E.coli YjfY.

The polypeptide is Protein YdgH (ydgH) (Escherichia coli (strain K12)).